We begin with the raw amino-acid sequence, 389 residues long: Acetylornithine aminotransferase (389 aa).

Pyridoxal 5'-phosphate contacts are provided by residues glycine 96–threonine 97 and phenylalanine 123. Arginine 126 is a N(2)-acetyl-L-ornithine binding site. Aspartate 207 to glutamine 210 is a pyridoxal 5'-phosphate binding site. Lysine 236 is subject to N6-(pyridoxal phosphate)lysine. Serine 264 provides a ligand contact to N(2)-acetyl-L-ornithine. A pyridoxal 5'-phosphate-binding site is contributed by threonine 265.

The protein belongs to the class-III pyridoxal-phosphate-dependent aminotransferase family. ArgD subfamily. As to quaternary structure, homodimer. The cofactor is pyridoxal 5'-phosphate.

The protein resides in the cytoplasm. It catalyses the reaction N(2)-acetyl-L-ornithine + 2-oxoglutarate = N-acetyl-L-glutamate 5-semialdehyde + L-glutamate. It participates in amino-acid biosynthesis; L-arginine biosynthesis; N(2)-acetyl-L-ornithine from L-glutamate: step 4/4. In Lactiplantibacillus plantarum (strain ATCC BAA-793 / NCIMB 8826 / WCFS1) (Lactobacillus plantarum), this protein is Acetylornithine aminotransferase.